The sequence spans 92 residues: uncharacterized protein (92 aa).

This is an uncharacterized protein from Schizosaccharomyces pombe (strain 972 / ATCC 24843) (Fission yeast).